A 748-amino-acid polypeptide reads, in one-letter code: Translation factor GUF1 homolog 1, mitochondrial (748 aa).

The N-terminal 29 residues, 1 to 29 (MRVGCCLLLKPIRQRLCTASISSRHIMRW), are a transit peptide targeting the mitochondrion. In terms of domain architecture, tr-type G spans 94 to 276 (SHIRNFAVVA…AIIERVPPPT (183 aa)). GTP-binding positions include 103–110 (AHVDHGKT), 167–171 (DTPGH), and 221–224 (TKMD).

It belongs to the TRAFAC class translation factor GTPase superfamily. Classic translation factor GTPase family. LepA subfamily.

The protein localises to the mitochondrion inner membrane. It carries out the reaction GTP + H2O = GDP + phosphate + H(+). Functionally, promotes mitochondrial protein synthesis. May act as a fidelity factor of the translation reaction, by catalyzing a one-codon backward translocation of tRNAs on improperly translocated ribosomes. Binds to mitochondrial ribosomes in a GTP-dependent manner. The sequence is that of Translation factor GUF1 homolog 1, mitochondrial from Trypanosoma cruzi (strain CL Brener).